The chain runs to 348 residues: Probable UDP-arabinopyranose mutase 5 (348 aa).

The DXD motif motif lies at 100–102; the sequence is DDD. An N-linked (Glc...) arginine glycan is attached at R148.

This sequence belongs to the RGP family. In terms of assembly, heteromers with RGP1 and RGP2. Mn(2+) is required as a cofactor. The cofactor is Mg(2+). Reversibly glycosylated in vitro by UDP-glucose, UDP-xylose and UDP-galactose, but not UDP-mannose. Widely expressed at low levels.

The protein resides in the cytoplasm. The protein localises to the cytosol. It is found in the golgi apparatus. The enzyme catalyses UDP-beta-L-arabinofuranose = UDP-beta-L-arabinopyranose. In terms of biological role, probable UDP-L-arabinose mutase involved in the biosynthesis of cell wall non-cellulosic polysaccharides. This Arabidopsis thaliana (Mouse-ear cress) protein is Probable UDP-arabinopyranose mutase 5.